Here is a 135-residue protein sequence, read N- to C-terminus: ATP synthase epsilon chain (135 aa).

This sequence belongs to the ATPase epsilon chain family. In terms of assembly, F-type ATPases have 2 components, CF(1) - the catalytic core - and CF(0) - the membrane proton channel. CF(1) has five subunits: alpha(3), beta(3), gamma(1), delta(1), epsilon(1). CF(0) has three main subunits: a, b and c.

The protein localises to the cell inner membrane. Its function is as follows. Produces ATP from ADP in the presence of a proton gradient across the membrane. This is ATP synthase epsilon chain from Brucella anthropi (strain ATCC 49188 / DSM 6882 / CCUG 24695 / JCM 21032 / LMG 3331 / NBRC 15819 / NCTC 12168 / Alc 37) (Ochrobactrum anthropi).